Here is a 583-residue protein sequence, read N- to C-terminus: MLO-like protein 6 (583 aa).

Over 1–15 the chain is Extracellular; that stretch reads MADQVKEKTLEETST. A helical transmembrane segment spans residues 16–36; it reads WAVAVVCFVLLLISIVIEKLI. Residues 37 to 61 lie on the Cytoplasmic side of the membrane; it reads HKIGSWFKKKNKKALYEALEKVKAE. The chain crosses the membrane as a helical span at residues 62–82; the sequence is LMLMGFISLLLTIGQGYISNI. Topologically, residues 83–161 are extracellular; that stretch reads CIPKNIAASM…VSAYGMHQLH (79 aa). A helical membrane pass occupies residues 162–182; that stretch reads IFIFVLAVCHVIYCIVTYALG. Residues 183 to 284 lie on the Cytoplasmic side of the membrane; the sequence is KTKMRRWKKW…KYIQRSLEED (102 aa). The helical transmembrane segment at 285–305 threads the bilayer; sequence FKTIVEINPVIWFIAVLFLLT. Topologically, residues 306–314 are extracellular; sequence NTNGLNSYL. The helical transmembrane segment at 315 to 335 threads the bilayer; sequence WLPFIPFIVILIVGTKLQVII. The Cytoplasmic portion of the chain corresponds to 336-368; the sequence is TKLGLRIQEKGDVVKGTPLVQPGDHFFWFGRPR. Residues 369-389 traverse the membrane as a helical segment; the sequence is FILFLIHLVLFTNAFQLAFFV. Topologically, residues 390–411 are extracellular; sequence WSTYEFGLKNCFHESRVDVIIR. The chain crosses the membrane as a helical span at residues 412–432; sequence ISIGLLVQILCSYVTLPLYAL. The Cytoplasmic segment spans residues 433 to 583; the sequence is VTQMGSKMKP…ISLRDFSFKR (151 aa). A calmodulin-binding region spans residues 447 to 468; the sequence is ERVATALKSWHHTAKKNIKHGR. The tract at residues 461–583 is disordered; that stretch reads KKNIKHGRTS…ISLRDFSFKR (123 aa). Over residues 470–484 the composition is skewed to low complexity; the sequence is SESTTPFSSRPTTPT. The segment covering 541-551 has biased composition (basic and acidic residues); it reads RFGEEESEKKF.

Belongs to the MLO family.

The protein resides in the membrane. May be involved in modulation of pathogen defense and leaf cell death. Activity seems to be regulated by Ca(2+)-dependent calmodulin binding and seems not to require heterotrimeric G proteins. The sequence is that of MLO-like protein 6 (MLO6) from Arabidopsis thaliana (Mouse-ear cress).